A 130-amino-acid chain; its full sequence is Small ribosomal subunit protein uS8 (130 aa).

This sequence belongs to the universal ribosomal protein uS8 family. As to quaternary structure, part of the 30S ribosomal subunit.

In terms of biological role, one of the primary rRNA binding proteins, it binds directly to 16S rRNA central domain where it helps coordinate assembly of the platform of the 30S subunit. In Korarchaeum cryptofilum (strain OPF8), this protein is Small ribosomal subunit protein uS8.